A 196-amino-acid chain; its full sequence is Small ribosomal subunit protein uS4C (196 aa).

The region spanning 87 to 149 (CRLDNVVYRI…HRQNEMFSNN (63 aa)) is the S4 RNA-binding domain.

Belongs to the universal ribosomal protein uS4 family. As to quaternary structure, part of the 30S ribosomal subunit. Contacts protein S5. The interaction surface between S4 and S5 is involved in control of translational fidelity.

Functionally, one of the primary rRNA binding proteins, it binds directly to 16S rRNA where it nucleates assembly of the body of the 30S subunit. Its function is as follows. With S5 and S12 plays an important role in translational accuracy. The chain is Small ribosomal subunit protein uS4C (rpsD3) from Clostridium acetobutylicum (strain ATCC 824 / DSM 792 / JCM 1419 / IAM 19013 / LMG 5710 / NBRC 13948 / NRRL B-527 / VKM B-1787 / 2291 / W).